The following is a 1916-amino-acid chain: Endoribonuclease Dicer (1916 aa).

Residues 51 to 227 (LLEAALDHNT…ELEEKIQKLE (177 aa)) enclose the Helicase ATP-binding domain. Residue 64 to 71 (LNTGSGKT) participates in ATP binding. The short motif at 175–178 (DECH) is the DECH box element. Residues 256 to 595 (DCGPFTDRSG…LRNKCSKSAD (340 aa)) form a required for interaction with PRKRA and TARBP2 region. A disordered region spans residues 409-433 (YVSWSDSEDDDDDEEIEEKEKPETN). Phosphoserine is present on residues Ser413 and Ser415. Residues 414-425 (DSEDDDDDEEIE) show a composition bias toward acidic residues. In terms of domain architecture, Helicase C-terminal spans 433-602 (NFPSPFTNIL…SADGAEADVH (170 aa)). The Dicer dsRNA-binding fold domain maps to 630–722 (AIGHINRYCA…MPVGKETVKY (93 aa)). Residues 726–745 (LDLHDEEETSVPGRPGSTKR) form a disordered region. The PAZ domain occupies 895–1042 (KFMEDIEKSE…LVPELCAIHP (148 aa)). Residues Ser1016 and Ser1160 each carry the phosphoserine modification. The RNase III 1 domain occupies 1276-1403 (DSEQSPSVGY…SEKWEKDEMT (128 aa)). Residues Glu1316, Glu1395, and Glu1398 each contribute to the Mg(2+) site. Residues Ser1456, Ser1464, and Ser1466 each carry the phosphoserine modification. The segment at 1598–1626 (ALDPAQENGSSQQKSLSGSCAAPVGPRSS) is disordered. Positions 1604–1615 (ENGSSQQKSLSG) are enriched in polar residues. An RNase III 2 domain is found at 1660–1818 (FETFEKKINY…LAGAIYMDSG (159 aa)). The Mg(2+) site is built by Glu1699, Asp1804, and Glu1807. The DRBM domain occupies 1843–1908 (VPRSPVRELL…ARRALRSLKA (66 aa)). Phosphoserine is present on Ser1862.

This sequence belongs to the helicase family. Dicer subfamily. As to quaternary structure, component of the RISC loading complex (RLC), or micro-RNA (miRNA) loading complex (miRLC), which is composed of DICER1, AGO2 and TARBP2; DICER1 and TARBP2 are required to process precursor miRNAs (pre-miRNAs) to mature miRNAs and then load them onto AGO2. Note that the trimeric RLC/miRLC is also referred to as RISC. Interacts with DHX9, AGO1, PIWIL1 and PRKRA. Interacts with AGO2, TARBP2, EIF6, MOV10 and RPL7A (60S ribosome subunit); they form a large RNA-induced silencing complex (RISC). Interacts with BCDIN3D. Interacts (via Dicer dsRNA-binding fold domain) with ALOX5 (via PLAT domain); this interaction enhances arachidonate 5-lipoxygenase activity and modifies the miRNA precursor processing activity of DICER1. It depends on Mg(2+) as a cofactor. Requires Mn(2+) as cofactor. Isoform 1 is expressed in a wide variety of tissues. Isoform 2 is specifically expressed in oocytes during their growth (at protein level).

The protein localises to the cytoplasm. It catalyses the reaction Endonucleolytic cleavage to 5'-phosphomonoester.. Functionally, double-stranded RNA (dsRNA) endoribonuclease playing a central role in short dsRNA-mediated post-transcriptional gene silencing. Cleaves naturally occurring long dsRNAs and short hairpin pre-microRNAs (miRNA) into fragments of twenty-one to twenty-three nucleotides with 3' overhang of two nucleotides, producing respectively short interfering RNAs (siRNA) and mature microRNAs. SiRNAs and miRNAs serve as guide to direct the RNA-induced silencing complex (RISC) to complementary RNAs to degrade them or prevent their translation. Gene silencing mediated by siRNAs, also called RNA interference, controls the elimination of transcripts from mobile and repetitive DNA elements of the genome but also the degradation of exogenous RNA of viral origin for instance. The miRNA pathway on the other side is a mean to specifically regulate the expression of target genes. In terms of biological role, more active than isoform 1 to process long double-stranded RNA into siRNAs. Responsible for the accumulation of endogenous siRNAs observed in mouse oocytes compared to somatic cells and it regulates meiotic spindle organization in female germline. The sequence is that of Endoribonuclease Dicer (Dicer1) from Mus musculus (Mouse).